The sequence spans 1057 residues: Probable E3 ubiquitin-protein ligase HERC4 (1057 aa).

RCC1 repeat units follow at residues 1–51, 52–101, 102–154, 156–207, 208–259, 261–311, and 313–366; these read MLCW…FVLD, DGTV…ALND, KGQV…ALSK, SEVF…VLTL, SGAI…ALTK, GGVF…AFVP, and SGRI…CVKR. The HECT domain occupies 730–1057; that stretch reads KNIDYKKPLK…IDHNEGFSLI (328 aa). The active-site Glycyl thioester intermediate is the Cys-1025.

Its subcellular location is the cytoplasm. It localises to the cytosol. It carries out the reaction S-ubiquitinyl-[E2 ubiquitin-conjugating enzyme]-L-cysteine + [acceptor protein]-L-lysine = [E2 ubiquitin-conjugating enzyme]-L-cysteine + N(6)-ubiquitinyl-[acceptor protein]-L-lysine.. Its pathway is protein modification; protein ubiquitination. Functionally, probable E3 ubiquitin-protein ligase involved in either protein trafficking or in the distribution of cellular structures. Required for spermatozoon maturation and fertility, and for the removal of the cytoplasmic droplet of the spermatozoon. E3 ubiquitin-protein ligases accept ubiquitin from an E2 ubiquitin-conjugating enzyme in the form of a thioester and then directly transfer it to targeted substrates. This Rattus norvegicus (Rat) protein is Probable E3 ubiquitin-protein ligase HERC4 (Herc4).